Reading from the N-terminus, the 266-residue chain is Agamous-like MADS-box protein AGL97 (266 aa).

Residues 3 to 63 (GVKRKIAIEK…SNSNAAFYSF (61 aa)) enclose the MADS-box domain. The stretch at 88–130 (WEDESLLKSENLEELREAMDSMSTMLRDLKELEKQRDHQTQTL) forms a coiled coil.

Interacts with AGL27 and AGL62.

Its subcellular location is the nucleus. Functionally, putative transcription factor. The protein is Agamous-like MADS-box protein AGL97 (AGL97) of Arabidopsis thaliana (Mouse-ear cress).